The primary structure comprises 322 residues: 4-hydroxythreonine-4-phosphate dehydrogenase (322 aa).

A substrate-binding site is contributed by Thr-132. A divalent metal cation-binding residues include His-160, His-205, and His-260. Substrate-binding residues include Lys-268, Asn-277, and Arg-286.

It belongs to the PdxA family. As to quaternary structure, homodimer. It depends on Zn(2+) as a cofactor. The cofactor is Mg(2+). Co(2+) is required as a cofactor.

The protein resides in the cytoplasm. It carries out the reaction 4-(phosphooxy)-L-threonine + NAD(+) = 3-amino-2-oxopropyl phosphate + CO2 + NADH. It participates in cofactor biosynthesis; pyridoxine 5'-phosphate biosynthesis; pyridoxine 5'-phosphate from D-erythrose 4-phosphate: step 4/5. Functionally, catalyzes the NAD(P)-dependent oxidation of 4-(phosphooxy)-L-threonine (HTP) into 2-amino-3-oxo-4-(phosphooxy)butyric acid which spontaneously decarboxylates to form 3-amino-2-oxopropyl phosphate (AHAP). This is 4-hydroxythreonine-4-phosphate dehydrogenase from Xanthomonas campestris pv. campestris (strain B100).